Here is a 100-residue protein sequence, read N- to C-terminus: Pregnancy-associated protein bPAP (100 aa).

Residues 1 to 40 (DSELAGPRGARGPHGLSGPHGLSGLXGPXGYTGPIGMXGL) form a disordered region. The span at 13–29 (PHGLSGPHGLSGLXGPX) shows a compositional bias: low complexity.

In terms of tissue distribution, detected at high levels in the urine of pregnant females (at protein level) and at far lower levels in the urine of nonpregnant females.

The sequence is that of Pregnancy-associated protein bPAP from Bos taurus (Bovine).